The primary structure comprises 260 residues: Voltage-dependent calcium channel gamma-6 subunit (260 aa).

4 helical membrane-spanning segments follow: residues 43–63 (LLVA…EFWV), 143–163 (VIAV…IMVL), 169–189 (SLLR…FVSL), and 221–241 (LGCG…FLLL).

Belongs to the PMP-22/EMP/MP20 family. CACNG subfamily. In terms of assembly, interacts with CACNA1C. Identified in a complex with the L-type calcium channel subunits CACNA1C, CACNA2D1 and either CACNB1 or CACNB2. Detected in brain and heart (at protein level).

The protein resides in the cell membrane. Regulates the activity of L-type calcium channels that contain CACNA1C as pore-forming subunit. The chain is Voltage-dependent calcium channel gamma-6 subunit (Cacng6) from Mus musculus (Mouse).